The primary structure comprises 344 residues: Ferredoxin--NADP reductase (344 aa).

Residues Asp36, Gln44, Tyr49, Val89, Phe127, Asp291, and Thr332 each contribute to the FAD site.

This sequence belongs to the ferredoxin--NADP reductase type 2 family. As to quaternary structure, homodimer. FAD serves as cofactor.

The enzyme catalyses 2 reduced [2Fe-2S]-[ferredoxin] + NADP(+) + H(+) = 2 oxidized [2Fe-2S]-[ferredoxin] + NADPH. The sequence is that of Ferredoxin--NADP reductase from Beijerinckia indica subsp. indica (strain ATCC 9039 / DSM 1715 / NCIMB 8712).